A 413-amino-acid chain; its full sequence is Phosphopentomutase (413 aa).

The Mn(2+) site is built by aspartate 11, aspartate 306, histidine 311, aspartate 347, histidine 348, and histidine 359.

Belongs to the phosphopentomutase family. It depends on Mn(2+) as a cofactor.

It localises to the cytoplasm. The enzyme catalyses 2-deoxy-alpha-D-ribose 1-phosphate = 2-deoxy-D-ribose 5-phosphate. It carries out the reaction alpha-D-ribose 1-phosphate = D-ribose 5-phosphate. Its pathway is carbohydrate degradation; 2-deoxy-D-ribose 1-phosphate degradation; D-glyceraldehyde 3-phosphate and acetaldehyde from 2-deoxy-alpha-D-ribose 1-phosphate: step 1/2. Its function is as follows. Isomerase that catalyzes the conversion of deoxy-ribose 1-phosphate (dRib-1-P) and ribose 1-phosphate (Rib-1-P) to deoxy-ribose 5-phosphate (dRib-5-P) and ribose 5-phosphate (Rib-5-P), respectively. The protein is Phosphopentomutase of Helicobacter acinonychis (strain Sheeba).